The following is a 426-amino-acid chain: Protein arginine methyltransferase NDUFAF7 homolog, mitochondrial (426 aa).

Belongs to the NDUFAF7 family.

The protein resides in the mitochondrion. The enzyme catalyses L-arginyl-[protein] + 2 S-adenosyl-L-methionine = N(omega),N(omega)'-dimethyl-L-arginyl-[protein] + 2 S-adenosyl-L-homocysteine + 2 H(+). In terms of biological role, arginine methyltransferase involved in the assembly or stability of mitochondrial NADH:ubiquinone oxidoreductase complex (complex I). The chain is Protein arginine methyltransferase NDUFAF7 homolog, mitochondrial from Caenorhabditis elegans.